The following is a 394-amino-acid chain: 4-O-methyl-glucuronoyl methylesterase (394 aa).

A signal peptide spans 1-18; it reads MVHLTPALLLASAAFAAA. Disulfide bonds link C29–C63, C210–C345, and C242–C317. The GXSYXG catalytic site motif signature appears at 209–214; the sequence is GCSRNG. The active-site Nucleophile is S211. Residues K215, Q257, E265, and W308 each coordinate substrate. H344 serves as the catalytic Proton donor/acceptor.

It belongs to the carbohydrate esterase 15 (CE15) family.

Its subcellular location is the secreted. It catalyses the reaction a 4-O-methyl-alpha-D-glucuronosyl ester derivative + H2O = 4-O-methyl-alpha-D-glucuronate derivative + an alcohol + H(+). In terms of biological role, glucuronoyl esterase which may play a significant role in biomass degradation, as it is considered to disconnect hemicellulose from lignin through the hydrolysis of the ester bond between 4-O-methyl-D-glucuronic acid residues of glucuronoxylans and aromatic alcohols of lignin. The protein is 4-O-methyl-glucuronoyl methylesterase of Neurospora crassa (strain ATCC 24698 / 74-OR23-1A / CBS 708.71 / DSM 1257 / FGSC 987).